Reading from the N-terminus, the 110-residue chain is UPF0060 membrane protein Bcep18194_A4425 (110 aa).

A run of 4 helical transmembrane segments spans residues 9 to 29 (ALFA…WLVL), 34 to 54 (PVWL…LLTL), 66 to 86 (YGGV…GVAL), and 88 to 108 (RWDV…ALQP).

Belongs to the UPF0060 family.

The protein resides in the cell inner membrane. The chain is UPF0060 membrane protein Bcep18194_A4425 from Burkholderia lata (strain ATCC 17760 / DSM 23089 / LMG 22485 / NCIMB 9086 / R18194 / 383).